The sequence spans 238 residues: Opacity protein opA60 (238 aa).

Ala1 is a signal peptide.

Belongs to the opacity porin family.

The protein resides in the cell outer membrane. In terms of biological role, implicated in a number of adherence functions. OPA proteins are implicated in pathogenesis and are subject to phase variation. This chain is Opacity protein opA60 (opaH), found in Neisseria gonorrhoeae.